Reading from the N-terminus, the 219-residue chain is ATP-dependent Clp protease proteolytic subunit (219 aa).

Ser-101 acts as the Nucleophile in catalysis. His-126 is a catalytic residue.

The protein belongs to the peptidase S14 family. In terms of assembly, component of the chloroplastic Clp protease core complex.

It is found in the plastid. Its subcellular location is the chloroplast stroma. It carries out the reaction Hydrolysis of proteins to small peptides in the presence of ATP and magnesium. alpha-casein is the usual test substrate. In the absence of ATP, only oligopeptides shorter than five residues are hydrolyzed (such as succinyl-Leu-Tyr-|-NHMec, and Leu-Tyr-Leu-|-Tyr-Trp, in which cleavage of the -Tyr-|-Leu- and -Tyr-|-Trp bonds also occurs).. Functionally, cleaves peptides in various proteins in a process that requires ATP hydrolysis. Has a chymotrypsin-like activity. Plays a major role in the degradation of misfolded proteins. This chain is ATP-dependent Clp protease proteolytic subunit, found in Chara vulgaris (Common stonewort).